Here is a 133-residue protein sequence, read N- to C-terminus: Cell division protein FtsL (133 aa).

Over 1–45 the chain is Cytoplasmic; sequence MAVEKVYQPYDEQVYNSIPKQQPQTKPEKKTVSRKVVVQLTKFEK. The chain crosses the membrane as a helical span at residues 46 to 65; the sequence is VLYITLITVIAMLSIYMLSL. The Extracellular portion of the chain corresponds to 66–133; sequence KMDAYDTRGK…VVRSNGEAKN (68 aa).

This sequence belongs to the FtsL family.

Its subcellular location is the cell membrane. Essential cell division protein. This Staphylococcus aureus (strain NCTC 8325 / PS 47) protein is Cell division protein FtsL.